The following is a 513-amino-acid chain: Putative thymidine phosphorylase 2 (513 aa).

It belongs to the thymidine/pyrimidine-nucleoside phosphorylase family. Type 2 subfamily.

The catalysed reaction is thymidine + phosphate = 2-deoxy-alpha-D-ribose 1-phosphate + thymine. This chain is Putative thymidine phosphorylase 2, found in Acidovorax sp. (strain JS42).